The primary structure comprises 444 residues: RAC family serine/threonine-protein kinase homolog (444 aa).

The PH domain occupies 5 to 100; the sequence is PIKHEGFLTK…WIEILINERE (96 aa). Residues 120–374 enclose the Protein kinase domain; sequence FELLNLVGKG…PNLIKRHPFF (255 aa). Residues 126–134 and lysine 149 contribute to the ATP site; that span reads VGKGSFGKV. Aspartate 243 serves as the catalytic Proton acceptor. Threonine 278 bears the Phosphothreonine mark. Positions 375-444 constitute an AGC-kinase C-terminal domain; sequence RSIDWEQLFQ…TYVAESEHLR (70 aa).

Belongs to the protein kinase superfamily. AGC Ser/Thr protein kinase family. RAC subfamily.

The enzyme catalyses L-seryl-[protein] + ATP = O-phospho-L-seryl-[protein] + ADP + H(+). It catalyses the reaction L-threonyl-[protein] + ATP = O-phospho-L-threonyl-[protein] + ADP + H(+). Functionally, predominantly involved during the aggregation to control cell polarity and chemotaxis. Phosphorylates talB, gefN, gefS, PI4P 5-kinase and gacQ. The chain is RAC family serine/threonine-protein kinase homolog (pkbA) from Dictyostelium discoideum (Social amoeba).